Consider the following 145-residue polypeptide: uncharacterized protein (145 aa).

Met1 is modified (N-acetylmethionine). Residues Gln15–Pro41 are disordered. Positions Leu16–Arg27 are enriched in polar residues. Residues Ser121 and Ser126 each carry the phosphoserine modification. Residues Asn125–Asp145 form a disordered region. Over residues Asp135–Asp145 the composition is skewed to acidic residues.

The protein belongs to the PDCD5 family.

This is an uncharacterized protein from Saccharomyces cerevisiae (strain ATCC 204508 / S288c) (Baker's yeast).